A 186-amino-acid polypeptide reads, in one-letter code: MSIEALKARLPDYAKDLRLNLGSVLTTSSLKPGQVWGAAIAAAYAARNDDVTRAIVAEAAQHLDAAGLTAAKAAGAIMGMNNVYYRTVHLSGNADFKKIPARLRMNVIGNPGVEKVDFELWSLAASAVNGCGMCIEAHEREVMHKGMSTENIQDAVRIAAVIHAVATVLDAEAALSGQDGSTAVAA.

Catalysis depends on C131, which acts as the Proton donor. A disulfide bridge links C131 with C134. C134 acts as the Cysteine sulfenic acid (-SOH) intermediate in catalysis.

Belongs to the AhpD family.

It catalyses the reaction N(6)-[(R)-dihydrolipoyl]-L-lysyl-[lipoyl-carrier protein] + a hydroperoxide = N(6)-[(R)-lipoyl]-L-lysyl-[lipoyl-carrier protein] + an alcohol + H2O. In terms of biological role, antioxidant protein with alkyl hydroperoxidase activity. Required for the reduction of the AhpC active site cysteine residues and for the regeneration of the AhpC enzyme activity. In Rhodospirillum centenum (strain ATCC 51521 / SW), this protein is Alkyl hydroperoxide reductase AhpD.